Consider the following 553-residue polypeptide: Thermosome subunit beta (553 aa).

Positions 534 to 553 (KKSEGKTGEKKESEKGKEED) are disordered.

Belongs to the TCP-1 chaperonin family. As to quaternary structure, forms a Heterooligomeric complex of two stacked eight-membered rings.

Functionally, molecular chaperone; binds unfolded polypeptides in vitro, and has a weak ATPase activity. This is Thermosome subunit beta (thsB) from Sulfolobus acidocaldarius (strain ATCC 33909 / DSM 639 / JCM 8929 / NBRC 15157 / NCIMB 11770).